The following is a 363-amino-acid chain: Insulin gene enhancer protein ISL-3 (363 aa).

LIM zinc-binding domains are found at residues 27–80 and 89–143; these read CVGC…CKRD and CAKC…RADH. The segment at residues 191–250 is a DNA-binding region (homeobox); it reads TTRVRTVLNEKQLHTLRTCYNANPRPDALMREQLVEMTGLSPRVIRVWFQNKRCKDKKRS. A disordered region spans residues 328–363; that stretch reads FSESGSLGNSSGSDVTSLSSHLPDTPNSMVPSPVET. The segment covering 329–340 has biased composition (low complexity); it reads SESGSLGNSSGS. A compositionally biased stretch (polar residues) spans 341–363; sequence DVTSLSSHLPDTPNSMVPSPVET.

Its subcellular location is the nucleus. Binds to one of the cis-acting domain of the insulin gene enhancer. May be involved in subtype specialization of primary motoneurons. In Oncorhynchus tshawytscha (Chinook salmon), this protein is Insulin gene enhancer protein ISL-3 (isl3).